Reading from the N-terminus, the 245-residue chain is Ribonuclease PH (245 aa).

Phosphate contacts are provided by residues Arg-86 and 124–126 (GTR).

This sequence belongs to the RNase PH family. Homohexameric ring arranged as a trimer of dimers.

The catalysed reaction is tRNA(n+1) + phosphate = tRNA(n) + a ribonucleoside 5'-diphosphate. In terms of biological role, phosphorolytic 3'-5' exoribonuclease that plays an important role in tRNA 3'-end maturation. Removes nucleotide residues following the 3'-CCA terminus of tRNAs; can also add nucleotides to the ends of RNA molecules by using nucleoside diphosphates as substrates, but this may not be physiologically important. Probably plays a role in initiation of 16S rRNA degradation (leading to ribosome degradation) during starvation. The protein is Ribonuclease PH of Bacillus mycoides (strain KBAB4) (Bacillus weihenstephanensis).